Consider the following 511-residue polypeptide: Centrosomal protein CCDC61 (511 aa).

Met-1 bears the N-acetylmethionine mark. Residues 1–143 (MDQPAGLQVD…PLPLPYQGKP (143 aa)) form a head domain region. Coiled-coil stretches lie at residues 176–203 (IWHL…SREE) and 246–273 (SRRL…LNSE). A Phosphothreonine modification is found at Thr-283. Disordered regions lie at residues 284-413 (LPPV…DSFR) and 429-476 (SHSV…GGWV). Positions 290-302 (REGRASSSRERST) are enriched in basic and acidic residues. A phosphoserine mark is found at Ser-330 and Ser-332. Positions 360-369 (KQQQQQRNRM) are enriched in low complexity. Residues Ser-371 and Ser-374 each carry the phosphoserine modification. Positions 433 to 442 (SRSRRCRGRG) are enriched in basic residues. Ser-446 carries the phosphoserine modification. Polar residues predominate over residues 449–458 (PWSRSKTKST). The residue at position 472 (Ser-472) is a Phosphoserine.

The protein belongs to the CCDC61 family. As to quaternary structure, forms homodimers (via head domain). Interacts with CEP170. Interacts with PCM1 and CEP131. Binds tubulin.

The protein localises to the cytoplasm. Its subcellular location is the cytoskeleton. The protein resides in the microtubule organizing center. It is found in the centrosome. It localises to the centriolar satellite. The protein localises to the cilium basal body. Its function is as follows. Microtubule-binding centrosomal protein required for centriole cohesion, independently of the centrosome-associated protein/CEP250 and rootletin/CROCC linker. In interphase, required for anchoring microtubule at the mother centriole subdistal appendages and for centrosome positioning. During mitosis, may be involved in spindle assembly and chromatin alignment by regulating the organization of spindle microtubules into a symmetrical structure. Plays a non-essential role in ciliogenesis. This chain is Centrosomal protein CCDC61, found in Mus musculus (Mouse).